The sequence spans 157 residues: S-ribosylhomocysteine lyase (157 aa).

Residues His54, His58, and Cys126 each contribute to the Fe cation site.

Belongs to the LuxS family. In terms of assembly, homodimer. Fe cation is required as a cofactor.

The catalysed reaction is S-(5-deoxy-D-ribos-5-yl)-L-homocysteine = (S)-4,5-dihydroxypentane-2,3-dione + L-homocysteine. In terms of biological role, involved in the synthesis of autoinducer 2 (AI-2) which is secreted by bacteria and is used to communicate both the cell density and the metabolic potential of the environment. The regulation of gene expression in response to changes in cell density is called quorum sensing. Catalyzes the transformation of S-ribosylhomocysteine (RHC) to homocysteine (HC) and 4,5-dihydroxy-2,3-pentadione (DPD). The sequence is that of S-ribosylhomocysteine lyase from Bacillus cereus (strain G9842).